The primary structure comprises 219 residues: Ribosomal RNA large subunit methyltransferase E (219 aa).

S-adenosyl-L-methionine contacts are provided by Gly60, Trp62, Asp80, Asp96, and Asp120. The Proton acceptor role is filled by Lys160.

The protein belongs to the class I-like SAM-binding methyltransferase superfamily. RNA methyltransferase RlmE family.

The protein localises to the cytoplasm. It carries out the reaction uridine(2552) in 23S rRNA + S-adenosyl-L-methionine = 2'-O-methyluridine(2552) in 23S rRNA + S-adenosyl-L-homocysteine + H(+). Functionally, specifically methylates the uridine in position 2552 of 23S rRNA at the 2'-O position of the ribose in the fully assembled 50S ribosomal subunit. The protein is Ribosomal RNA large subunit methyltransferase E of Acidithiobacillus ferrooxidans (strain ATCC 23270 / DSM 14882 / CIP 104768 / NCIMB 8455) (Ferrobacillus ferrooxidans (strain ATCC 23270)).